The primary structure comprises 525 residues: 2-isopropylmalate synthase (525 aa).

Positions 5-267 constitute a Pyruvate carboxyltransferase domain; the sequence is VIIFDTTLRD…HTGIHHQEIY (263 aa). Mn(2+) contacts are provided by Asp14, His202, His204, and Asn238. The interval 392 to 525 is regulatory domain; sequence RLEYFSVQSS…NNSQDMQETV (134 aa).

This sequence belongs to the alpha-IPM synthase/homocitrate synthase family. LeuA type 1 subfamily. As to quaternary structure, homodimer. It depends on Mn(2+) as a cofactor.

The protein localises to the cytoplasm. It carries out the reaction 3-methyl-2-oxobutanoate + acetyl-CoA + H2O = (2S)-2-isopropylmalate + CoA + H(+). It functions in the pathway amino-acid biosynthesis; L-leucine biosynthesis; L-leucine from 3-methyl-2-oxobutanoate: step 1/4. Functionally, catalyzes the condensation of the acetyl group of acetyl-CoA with 3-methyl-2-oxobutanoate (2-ketoisovalerate) to form 3-carboxy-3-hydroxy-4-methylpentanoate (2-isopropylmalate). The sequence is that of 2-isopropylmalate synthase from Sodalis glossinidius (strain morsitans).